We begin with the raw amino-acid sequence, 480 residues long: Aspartyl/glutamyl-tRNA(Asn/Gln) amidotransferase subunit B (480 aa).

It belongs to the GatB/GatE family. GatB subfamily. Heterotrimer of A, B and C subunits.

It carries out the reaction L-glutamyl-tRNA(Gln) + L-glutamine + ATP + H2O = L-glutaminyl-tRNA(Gln) + L-glutamate + ADP + phosphate + H(+). The enzyme catalyses L-aspartyl-tRNA(Asn) + L-glutamine + ATP + H2O = L-asparaginyl-tRNA(Asn) + L-glutamate + ADP + phosphate + 2 H(+). Allows the formation of correctly charged Asn-tRNA(Asn) or Gln-tRNA(Gln) through the transamidation of misacylated Asp-tRNA(Asn) or Glu-tRNA(Gln) in organisms which lack either or both of asparaginyl-tRNA or glutaminyl-tRNA synthetases. The reaction takes place in the presence of glutamine and ATP through an activated phospho-Asp-tRNA(Asn) or phospho-Glu-tRNA(Gln). The protein is Aspartyl/glutamyl-tRNA(Asn/Gln) amidotransferase subunit B of Streptococcus agalactiae serotype Ia (strain ATCC 27591 / A909 / CDC SS700).